The following is a 690-amino-acid chain: Elongation factor G (690 aa).

The 276-residue stretch at 8–283 (SRCRNIGIMA…AVVDFLPSPS (276 aa)) folds into the tr-type G domain. Residues 17–24 (AHIDAGKT), 81–85 (DTPGH), and 135–138 (NKMD) each bind GTP.

It belongs to the TRAFAC class translation factor GTPase superfamily. Classic translation factor GTPase family. EF-G/EF-2 subfamily.

The protein resides in the cytoplasm. In terms of biological role, catalyzes the GTP-dependent ribosomal translocation step during translation elongation. During this step, the ribosome changes from the pre-translocational (PRE) to the post-translocational (POST) state as the newly formed A-site-bound peptidyl-tRNA and P-site-bound deacylated tRNA move to the P and E sites, respectively. Catalyzes the coordinated movement of the two tRNA molecules, the mRNA and conformational changes in the ribosome. The sequence is that of Elongation factor G from Anaplasma marginale (strain Florida).